A 4467-amino-acid chain; its full sequence is Protocadherin-like protein (4467 aa).

The first 22 residues, 1–22 (MRGINAIVGFLLCFCLLHRINT), serve as a signal peptide directing secretion. 28 consecutive Cadherin domains span residues 23-128 (AVQF…SPTF), 129-238 (PQHL…SPVF), 239-350 (EKKS…VPVF), 351-455 (QEES…TPVF), 459-566 (NPQQ…NPDF), 567-664 (SKVV…PPTF), 665-764 (KNAP…PPTF), 765-884 (SRSS…SPEF), 885-994 (SQTS…PPLF), 1092-1197 (EAQP…QPRF), 1290-1395 (SRTV…SPKF), 1396-1499 (SADS…PPKF), 1495-1597 (GPPK…EPQF), 1601-1701 (SNGF…QPVR), 1793-1891 (TMID…KPQF), 1892-1992 (SESA…YPKF), 1993-2100 (EPNL…KPQF), 2101-2202 (LESD…RPVF), 2203-2312 (TDCP…FPFF), 2313-2423 (LTRT…PPAF), 2425-2529 (PSAV…TPTF), 2530-2639 (KLEE…PPIF), 2640-2746 (PKPS…IPKF), 2747-2849 (DNLI…SPYF), 2850-2954 (PNPP…APVF), 2955-3062 (NPRE…PPVF), 3063-3170 (VPAE…GPWF), and 3173-3288 (RYYE…EPFD). At 23-4258 (AVQFKQEILE…RPSSRWANPA (4236 aa)) the chain is on the extracellular side. One can recognise an EGF-like 1 domain in the interval 3551–3589 (PDINCTTGTPCLHGGTCHNAVPKGIICECGRDYLGPECQ). Intrachain disulfides connect Cys3555-Cys3567, Cys3561-Cys3577, Cys3579-Cys3588, Cys3762-Cys3788, Cys3794-Cys3803, Cys3797-Cys3812, and Cys3814-Cys3823. In terms of domain architecture, Laminin G-like 1 spans 3590–3788 (STTRTFRGNS…LKEVNTELGC (199 aa)). Residues 3790-3824 (LNNQCPNCNGRGYCEPFWNYAICVCDLGFGGANCD) enclose the EGF-like 2 domain. The region spanning 3842 to 4096 (VKQVKRKRRE…KVIISSSGGS (255 aa)) is the Laminin G-like 2 domain. Residues 4089-4118 (IISSSGGSVSGGSGGASGGSGGASGSGGSV) form a disordered region. A compositionally biased stretch (gly residues) spans 4096-4118 (SVSGGSGGASGGSGGASGSGGSV). An EGF-like 3 domain is found at 4206-4238 (PCGSNFCRHGGTCVSADPPYCLCPVGWSGPVCE). Disulfide bonds link Cys4207–Cys4218, Cys4212–Cys4226, and Cys4228–Cys4237. The helical transmembrane segment at 4259 to 4279 (VIACILVILLAILVIIGAVLL) threads the bilayer. Residues 4280–4467 (KRRPQPAVVA…NLNRIFNEDE (188 aa)) lie on the Cytoplasmic side of the membrane. Positions 4424 to 4445 (DVDDLSELGDSDEEPDEEEEQE) are disordered.

Component of the acid-insoluble organic matrix of the aragonitic skeleton (at protein level).

Its subcellular location is the membrane. In Acropora millepora (Staghorn coral), this protein is Protocadherin-like protein.